The following is a 218-amino-acid chain: UPF0177 protein YaiF (218 aa).

The next 5 helical transmembrane spans lie at 8-28, 48-68, 81-101, 123-143, and 163-183; these read SIII…AVFL, FIIL…KCGF, ILLI…VVQF, ILSS…APIL, and FFLS…DILG.

The protein belongs to the UPF0177 family.

The protein localises to the cell membrane. This is UPF0177 protein YaiF (yaiF) from Lactococcus lactis subsp. lactis (strain IL1403) (Streptococcus lactis).